The sequence spans 1134 residues: MMVEPNQLVQHLETFVDTNRSSSQQDDSLKAIASSLENDSLSITQLVREMEMYLTTTDNLVRARGILLLAEILDCLKAKPLNDTIVHTLVGFFSEKLADWRAMCGALVGCLALLKRKDVAGVVTDIDVQAMAKSMIQNVQVQALALHERKLAFELLECLLQQHSEAILTMGDLLVYAMCEAIDGEKDPQCLMIVFHLVELLAPLFPSPSGPLASDASDLFEVIGCYFPLHFTHTKDDEANIRREDLSRGLLLAISSTPFFEPYAIPLLLEKLSSSLPVAKVDSLKCLKDCALKYGVDRMKKHYGALWSALKDTFYSSTGTHLSFAIESLTSPGFEMNEIHRDAVSLLQRLVKQDISFLGFVVDDTRINTVFDTIYRYPQYKEMPDPSKLEVLVISQILSVSAKASVQSCNIIFEAIFFRLMNTLGIVEKTSTGDVVQNGNSTVSTRLYHGGLHLCIELLAASKDLILGFEECSPTSGCANSGCSMVKSFSVPLIQVFTSAVCRSNDDSVVDVYLGVKGLLTMGMFRGGSSPVSRTEFENILVTLTSIITAKSGKTVVWELALKALVCIGSFIDRYHESDKAMSYMSIVVDNLVSLACSSHCGLPYQMILEATSEVCSTGPKYVEKMVQGLEEAFCSSLSDFYVNGNFESIDNCSQLLKCLTNKLLPRVAEIDGLEQLLVHFAISMWKQIEFCGVFSCDFNGREFVEAAMTTMRQVVGIALVDSQNSIIQKAYSVVSSCTLPAMESIPLTFVALEGLQRDLSSRDELILSLFASVIIAASPSASIPDAKSLIHLLLVTLLKGYIPAAQALGSMVNKLGSGSGGTNTSRDCSLEEACAIIFHADFASGKKISSNGSAKIIVGSETTMSKICLGYCGSLDLQTRAITGLAWIGKGLLMRGNERVNEIALVLVECLKSNNCSGHALHPSAMKHAADAFSIIMSDSEVCLNRKFHAVIRPLYKQRCFSTIVPILESLIMNSQTSLSRTMLHVALAHVISNVPVTVILDNTKKLQPLILEGLSVLSLDSVEKETLFSLLLVLSGTLTDTKGQQSASDNAHIIIECLIKLTSYPHLMVVRETSIQCLVALLELPHRRIYPFRREVLQAIEKSLDDPKRKVREEAIRCRQAWASITSGSNIF.

HEAT repeat units follow at residues 959–998, 1002–1047, 1050–1089, and 1092–1130; these read QRCFSTIVPILESLIMNSQTSLSRTMLHVALAHVISNVPV, LDNT…KGQQ, SDNAHIIIECLIKLTSYPHLMVVRETSIQCLVALLELPHR, and YPFRREVLQAIEKSLDDPKRKVREEAIRCRQAWASITSG.

The protein belongs to the MET18/MMS19 family. As to quaternary structure, part of a complex composed of AE7, CIA1, MMS19 and NAR1. Interacts with AE7.

It localises to the nucleus. It is found in the cytoplasm. Its function is as follows. May select specific target apoproteins to which a Fe-S cluster produced by the cytosolic iron-sulfur (Fe-S) protein assembly (CIA) pathway is transferred. This Arabidopsis thaliana (Mouse-ear cress) protein is MMS19 nucleotide excision repair protein homolog.